Here is a 122-residue protein sequence, read N- to C-terminus: Large ribosomal subunit protein uL18 (122 aa).

This sequence belongs to the universal ribosomal protein uL18 family. As to quaternary structure, part of the 50S ribosomal subunit; part of the 5S rRNA/L5/L18/L25 subcomplex. Contacts the 5S and 23S rRNAs.

This is one of the proteins that bind and probably mediate the attachment of the 5S RNA into the large ribosomal subunit, where it forms part of the central protuberance. In Pseudothermotoga lettingae (strain ATCC BAA-301 / DSM 14385 / NBRC 107922 / TMO) (Thermotoga lettingae), this protein is Large ribosomal subunit protein uL18.